A 191-amino-acid chain; its full sequence is Insulin-like peptide INSL6 (191 aa).

Positions 1-22 (MKQLCCSCLLWLGLLLTPFSRE) are cleaved as a signal peptide. Cystine bridges form between Cys-33–Cys-172, Cys-45–Cys-185, and Cys-171–Cys-176. Residues 53–161 (FEMEEQSPMT…RSLFWGNHSQ (109 aa)) constitute a propeptide, connecting peptide.

This sequence belongs to the insulin family.

It is found in the secreted. Its function is as follows. May have a role in sperm development and fertilization. This Mus musculus (Mouse) protein is Insulin-like peptide INSL6 (Insl6).